A 147-amino-acid polypeptide reads, in one-letter code: uncharacterized protein (147 aa).

A helical transmembrane segment spans residues 63-79; that stretch reads LFIVACSAVFATIAYIN.

The protein belongs to the FUN14 family.

The protein localises to the membrane. This is an uncharacterized protein from Schizosaccharomyces pombe (strain 972 / ATCC 24843) (Fission yeast).